Consider the following 250-residue polypeptide: Acidic leucine-rich nuclear phosphoprotein 32 family member E (250 aa).

The residue at position 8 (Ser-8) is a Phosphoserine. 3 LRR repeats span residues 43–64 (ELEFLSMVNVGLTSLAKLPSLP), 65–87 (KLRKLELSDNNISGTLETLAEKC), and 89–110 (NLTYLNLSGNKIKELSTLEALQ). An LRRCT domain is found at 123–161 (CEITTLEDYRESIFELLPQVTYLDGFDAEDNEAPDSEAD). Acidic residues-rich tracts occupy residues 149–171 (DAEDNEAPDSEADDDDDDEDGDE), 178–191 (EYEEEEEEDEEGSE), and 205–227 (IQDEEDDDDYVEEEEEEGGEEEA). The tract at residues 149-250 (DAEDNEAPDS…EGEDDDEDDD (102 aa)) is disordered. The interval 194-247 (EVGLSYLMKEDIQDEEDDDDYVEEEEEEGGEEEADVRGEKRKREAEDEGEDDDE) is ZID domain. Residues 228-238 (DVRGEKRKREA) show a composition bias toward basic and acidic residues. Over residues 239–250 (EDEGEDDDEDDD) the composition is skewed to acidic residues.

This sequence belongs to the ANP32 family. Component of a SWR1-like complex. Interacts with H2A.Z/H2AZ1. Phosphorylated. The phosphorylation is nuclear localization signal (NLS)-dependent.

Its subcellular location is the cytoplasm. It localises to the nucleus. Functionally, histone chaperone that specifically mediates the genome-wide removal of histone H2A.Z/H2AZ1 from the nucleosome: removes H2A.Z/H2AZ1 from its normal sites of deposition, especially from enhancer and insulator regions. Not involved in deposition of H2A.Z/H2AZ1 in the nucleosome. May stabilize the evicted H2A.Z/H2AZ1-H2B dimer, thus shifting the equilibrium towards dissociation and the off-chromatin state. Inhibits activity of protein phosphatase 2A (PP2A). Does not inhibit protein phosphatase 1. May play a role in cerebellar development and synaptogenesis. The protein is Acidic leucine-rich nuclear phosphoprotein 32 family member E (anp32e) of Danio rerio (Zebrafish).